Here is a 492-residue protein sequence, read N- to C-terminus: Catalase isozyme 3 (492 aa).

Catalysis depends on residues histidine 65 and asparagine 138. Tyrosine 347 provides a ligand contact to heme.

The protein belongs to the catalase family. Homotetramer. Heme serves as cofactor. As to expression, abundant in green cotyledons, etiolated cotyledons, green hypocotyl and root, but not in young leaf.

It localises to the peroxisome. It carries out the reaction 2 H2O2 = O2 + 2 H2O. Functionally, occurs in almost all aerobically respiring organisms and serves to protect cells from the toxic effects of hydrogen peroxide. The sequence is that of Catalase isozyme 3 (CAT3) from Cucurbita pepo (Vegetable marrow).